Reading from the N-terminus, the 212-residue chain is tRNA (guanine-N(7)-)-methyltransferase (212 aa).

S-adenosyl-L-methionine contacts are provided by E44, D69, D96, and D118. Residue D118 is part of the active site. K122 is a substrate binding site. Positions 124 to 129 are interaction with RNA; sequence RHEKRR. Substrate-binding positions include D154 and 191–194; that span reads TEYE.

This sequence belongs to the class I-like SAM-binding methyltransferase superfamily. TrmB family.

It catalyses the reaction guanosine(46) in tRNA + S-adenosyl-L-methionine = N(7)-methylguanosine(46) in tRNA + S-adenosyl-L-homocysteine. Its pathway is tRNA modification; N(7)-methylguanine-tRNA biosynthesis. Functionally, catalyzes the formation of N(7)-methylguanine at position 46 (m7G46) in tRNA. This is tRNA (guanine-N(7)-)-methyltransferase from Streptococcus suis (strain 05ZYH33).